The sequence spans 159 residues: Large ribosomal subunit protein uL30 (159 aa).

The protein belongs to the universal ribosomal protein uL30 family. As to quaternary structure, part of the 50S ribosomal subunit.

This chain is Large ribosomal subunit protein uL30, found in Ignicoccus hospitalis (strain KIN4/I / DSM 18386 / JCM 14125).